The primary structure comprises 349 residues: Phospho-N-acetylmuramoyl-pentapeptide-transferase (349 aa).

A run of 10 helical transmembrane segments spans residues 13–33 (LFFSLALTGMTTLVLTVSLGV), 69–89 (GGGVLLFISLIASLLVWLPWG), 91–111 (FSTWFFIILLTCYAGLGWYDD), 129–149 (FMVQIAIAAFTLIALPYIYGS), 165–185 (LSLPFWLGKVFCLGLALVAII), 197–217 (LDGLAAGTMSFAALGFIFVAL), 228–248 (VAYVLAALVGACIGFLWYNGF), 252–272 (LFMGDTGSLLLGGLLGSCAVM), 278–298 (ILVVIGGVFVAEAGSVILQVL), and 327–347 (IVMRFWIFSFVCAGLGIAAVL).

This sequence belongs to the glycosyltransferase 4 family. MraY subfamily. Mg(2+) is required as a cofactor.

It is found in the cell inner membrane. It carries out the reaction UDP-N-acetyl-alpha-D-muramoyl-L-alanyl-gamma-D-glutamyl-meso-2,6-diaminopimeloyl-D-alanyl-D-alanine + di-trans,octa-cis-undecaprenyl phosphate = di-trans,octa-cis-undecaprenyl diphospho-N-acetyl-alpha-D-muramoyl-L-alanyl-D-glutamyl-meso-2,6-diaminopimeloyl-D-alanyl-D-alanine + UMP. It functions in the pathway cell wall biogenesis; peptidoglycan biosynthesis. Its function is as follows. Catalyzes the initial step of the lipid cycle reactions in the biosynthesis of the cell wall peptidoglycan: transfers peptidoglycan precursor phospho-MurNAc-pentapeptide from UDP-MurNAc-pentapeptide onto the lipid carrier undecaprenyl phosphate, yielding undecaprenyl-pyrophosphoryl-MurNAc-pentapeptide, known as lipid I. This chain is Phospho-N-acetylmuramoyl-pentapeptide-transferase, found in Chlamydia pneumoniae (Chlamydophila pneumoniae).